Here is a 522-residue protein sequence, read N- to C-terminus: MSFGASFVSFLNAMMTFEEEKMQLACDDLKTTEKLCESEEAGVIETIKNKIKKNVDARKSTPSMVDRLQRQIIIADCQVYLAVLSFVKQELSAYIKGGWILRKAWKIYNKCYVDINALQELHQKTLTEEPLSSDAANDNHIVAEGVTEEALSRLKGAVSFGYGLFHLCISMVPPNLLKIINLLGFPGDRLQGLSSLTYASESKDMKAPLATLALLWYHTVVRPFFALDGSDNKGGLDEAKAILLRKESAYPNSSLFMFFKGRIQRLECQINSALTSFHTALELAVDQREIQHVCLYEIGWCSMIELNFKDAFDSFERLKNESRWSQCYYAYLTAVCQGATGDVDGAQLIFKEVQKLFKRKNNQIEQFSVKKAERFRKQTPTRALCVLASIEVLYLWKALPNCSLPNLQRMSQACHEVDDSSVVGLKHLLLGAIHKCLGNSQDAVQFFQRAAKDESCRQNNSYVQPYACYELGCLLLDRAETVARGRTLLLQAKEDFSGYDFENRLHVRVHAALASLRELVPQ.

TPR repeat units follow at residues 254–287, 292–325, and 424–457; these read SLFMFFKGRIQRLECQINSALTSFHTALELAVDQ, HVCLYEIGWCSMIELNFKDAFDSFERLKNESRWS, and GLKHLLLGAIHKCLGNSQDAVQFFQRAAKDESCR.

It belongs to the TTC39 family.

The protein is Tetratricopeptide repeat protein 39C (Ttc39c) of Rattus norvegicus (Rat).